The primary structure comprises 129 residues: Glycine cleavage system H protein (129 aa).

Residues 24 to 106 (LLKIGVSEFA…IGNGWLLIIK (83 aa)) form the Lipoyl-binding domain. Lysine 65 bears the N6-lipoyllysine mark.

The protein belongs to the GcvH family. As to quaternary structure, the glycine cleavage system is composed of four proteins: P, T, L and H. The cofactor is (R)-lipoate.

The glycine cleavage system catalyzes the degradation of glycine. The H protein shuttles the methylamine group of glycine from the P protein to the T protein. The chain is Glycine cleavage system H protein from Prochlorococcus marinus (strain MIT 9515).